A 498-amino-acid chain; its full sequence is ATP synthase subunit alpha 1 (498 aa).

The protein belongs to the ATPase alpha/beta chains family. As to quaternary structure, F-type ATPases have 2 components, CF(1) - the catalytic core - and CF(0) - the membrane proton channel. CF(1) has five subunits: alpha(3), beta(3), gamma(1), delta(1), epsilon(1). CF(0) has three main subunits: a(1), b(2) and c(9-12). The alpha and beta chains form an alternating ring which encloses part of the gamma chain. CF(1) is attached to CF(0) by a central stalk formed by the gamma and epsilon chains, while a peripheral stalk is formed by the delta and b chains.

It localises to the cell membrane. It carries out the reaction ATP + H2O + 4 H(+)(in) = ADP + phosphate + 5 H(+)(out). Its function is as follows. Produces ATP from ADP in the presence of a proton gradient across the membrane. The alpha chain is a regulatory subunit. This is ATP synthase subunit alpha 1 from Listeria monocytogenes serovar 1/2a (strain ATCC BAA-679 / EGD-e).